The following is a 210-amino-acid chain: Ribosomal RNA large subunit methyltransferase E (210 aa).

S-adenosyl-L-methionine contacts are provided by Gly61, Trp63, Asp81, Asp97, and Asp122. The active-site Proton acceptor is Lys162.

The protein belongs to the class I-like SAM-binding methyltransferase superfamily. RNA methyltransferase RlmE family.

Its subcellular location is the cytoplasm. The enzyme catalyses uridine(2552) in 23S rRNA + S-adenosyl-L-methionine = 2'-O-methyluridine(2552) in 23S rRNA + S-adenosyl-L-homocysteine + H(+). Specifically methylates the uridine in position 2552 of 23S rRNA at the 2'-O position of the ribose in the fully assembled 50S ribosomal subunit. The protein is Ribosomal RNA large subunit methyltransferase E of Xanthomonas campestris pv. campestris (strain 8004).